The chain runs to 160 residues: MPSFDIVSEIKLEEVRNAVENANRELSTRFDFRGVEASFELKENIVTMSCDSDFQLKQMLDILRGTCVKRGVDTAAFEEKDVQHIGKIYKQAIAFKEGIEQPVAKKLIKMIKDAKIKVQASIQGDQVRVTGKKRDDLQQVMALAKSSDLEQPLQFTNFRD.

This sequence belongs to the YajQ family.

Functionally, nucleotide-binding protein. The chain is Nucleotide-binding protein Patl_4311 from Pseudoalteromonas atlantica (strain T6c / ATCC BAA-1087).